Reading from the N-terminus, the 411-residue chain is Dihydrofolate synthase/folylpolyglutamate synthase (411 aa).

Residue 53–56 (GKGT) participates in ATP binding. Residue S77 participates in Mg(2+) binding. Residues 116 to 119 (TYFE) and 147 to 149 (LDA) each bind 7,8-dihydropteroate. H167 contributes to the Mg(2+) binding site. Residues R283 and D296 each coordinate ATP.

Belongs to the folylpolyglutamate synthase family. Monomer. Mg(2+) serves as cofactor.

The catalysed reaction is 7,8-dihydropteroate + L-glutamate + ATP = 7,8-dihydrofolate + ADP + phosphate + H(+). It catalyses the reaction (6S)-5,6,7,8-tetrahydrofolyl-(gamma-L-Glu)(n) + L-glutamate + ATP = (6S)-5,6,7,8-tetrahydrofolyl-(gamma-L-Glu)(n+1) + ADP + phosphate + H(+). The enzyme catalyses 10-formyltetrahydrofolyl-(gamma-L-Glu)(n) + L-glutamate + ATP = 10-formyltetrahydrofolyl-(gamma-L-Glu)(n+1) + ADP + phosphate + H(+). It carries out the reaction (6R)-5,10-methylenetetrahydrofolyl-(gamma-L-Glu)(n) + L-glutamate + ATP = (6R)-5,10-methylenetetrahydrofolyl-(gamma-L-Glu)(n+1) + ADP + phosphate + H(+). It functions in the pathway cofactor biosynthesis; tetrahydrofolate biosynthesis; 7,8-dihydrofolate from 2-amino-4-hydroxy-6-hydroxymethyl-7,8-dihydropteridine diphosphate and 4-aminobenzoate: step 2/2. Its pathway is cofactor biosynthesis; tetrahydrofolylpolyglutamate biosynthesis. Its function is as follows. Functions in two distinct reactions of the de novo folate biosynthetic pathway. Catalyzes the addition of a glutamate residue to dihydropteroate (7,8-dihydropteroate or H2Pte) to form dihydrofolate (7,8-dihydrofolate monoglutamate or H2Pte-Glu). Also catalyzes successive additions of L-glutamate to tetrahydrofolate or 10-formyltetrahydrofolate or 5,10-methylenetetrahydrofolate, leading to folylpolyglutamate derivatives. The chain is Dihydrofolate synthase/folylpolyglutamate synthase (folC) from Buchnera aphidicola subsp. Acyrthosiphon pisum (strain APS) (Acyrthosiphon pisum symbiotic bacterium).